A 215-amino-acid chain; its full sequence is 3-demethoxyubiquinol 3-hydroxylase (215 aa).

Positions 64, 94, 97, 146, 178, and 181 each coordinate Fe cation.

This sequence belongs to the COQ7 family. The cofactor is Fe cation.

The protein localises to the cell membrane. It carries out the reaction a 5-methoxy-2-methyl-3-(all-trans-polyprenyl)benzene-1,4-diol + AH2 + O2 = a 3-demethylubiquinol + A + H2O. Its pathway is cofactor biosynthesis; ubiquinone biosynthesis. Catalyzes the hydroxylation of 2-nonaprenyl-3-methyl-6-methoxy-1,4-benzoquinol during ubiquinone biosynthesis. This is 3-demethoxyubiquinol 3-hydroxylase from Pseudomonas putida (strain W619).